The primary structure comprises 244 residues: 1-(5-phosphoribosyl)-5-[(5-phosphoribosylamino)methylideneamino] imidazole-4-carboxamide isomerase (244 aa).

The Proton acceptor role is filled by aspartate 8. Aspartate 129 (proton donor) is an active-site residue.

Belongs to the HisA/HisF family.

The protein localises to the cytoplasm. It carries out the reaction 1-(5-phospho-beta-D-ribosyl)-5-[(5-phospho-beta-D-ribosylamino)methylideneamino]imidazole-4-carboxamide = 5-[(5-phospho-1-deoxy-D-ribulos-1-ylimino)methylamino]-1-(5-phospho-beta-D-ribosyl)imidazole-4-carboxamide. The protein operates within amino-acid biosynthesis; L-histidine biosynthesis; L-histidine from 5-phospho-alpha-D-ribose 1-diphosphate: step 4/9. This chain is 1-(5-phosphoribosyl)-5-[(5-phosphoribosylamino)methylideneamino] imidazole-4-carboxamide isomerase, found in Chelativorans sp. (strain BNC1).